We begin with the raw amino-acid sequence, 230 residues long: Large ribosomal subunit protein uL1 (230 aa).

It belongs to the universal ribosomal protein uL1 family. In terms of assembly, part of the 50S ribosomal subunit.

In terms of biological role, binds directly to 23S rRNA. The L1 stalk is quite mobile in the ribosome, and is involved in E site tRNA release. Its function is as follows. Protein L1 is also a translational repressor protein, it controls the translation of the L11 operon by binding to its mRNA. This is Large ribosomal subunit protein uL1 from Oenococcus oeni (strain ATCC BAA-331 / PSU-1).